Reading from the N-terminus, the 1026-residue chain is DNA cross-link repair 1A protein (1026 aa).

Residues 1-189 (MLEDTWEEEI…RDSKEPLGSP (189 aa)) form a nuclear localization region region. The tract at residues 12 to 110 (EYKSKRKPKP…HRTRRGKQVT (99 aa)) is disordered. Basic and acidic residues predominate over residues 34 to 65 (SVEKSTDGKHQSKGNEKRTSENPGKTKDHKVC). Low complexity predominate over residues 71 to 82 (SQISAGSSQSSS). Basic residues predominate over residues 98–107 (KKQHRTRRGK). A UBZ4-type zinc finger spans residues 118–148 (DGYCPSCQMPFSSLLGQTPQWHVFECLDSPP). Residues Cys121, Cys124, His139, and Cys143 each coordinate Zn(2+). Residues Lys359, Lys434, and Lys522 each participate in a glycyl lysine isopeptide (Lys-Gly) (interchain with G-Cter in SUMO2) cross-link. Residues 401–602 (SQEDLPHTDA…SSLSDLEFDA (202 aa)) form a nuclear focus formation region. Disordered regions lie at residues 474–542 (PLEK…SKKV), 560–590 (ETSL…CKRK), and 602–651 (AKNL…PELG). The segment covering 527–540 (SPSSPKCSPSQPSK) has biased composition (low complexity). Positions 569 to 581 (EGPNVSPVVSPNQ) are enriched in polar residues. A phosphoserine mark is found at Ser574 and Ser578. A compositionally biased stretch (basic residues) spans 619–628 (RQHRRKRHKT). Lys657 is covalently cross-linked (Glycyl lysine isopeptide (Lys-Gly) (interchain with G-Cter in SUMO2)).

It belongs to the DNA repair metallo-beta-lactamase (DRMBL) family. In terms of assembly, binds constitutively to TP53BP1. Binds CDC27, which is itself a component of the anaphase promoting complex (APC). Binds PIAS1.

It is found in the nucleus. It catalyses the reaction a beta-lactam + H2O = a substituted beta-amino acid. May be required for DNA interstrand cross-link repair. Also required for checkpoint mediated cell cycle arrest in early prophase in response to mitotic spindle poisons. In Mus musculus (Mouse), this protein is DNA cross-link repair 1A protein (Dclre1a).